The sequence spans 419 residues: DNA primase DnaG (419 aa).

Residues 174–260 form the Toprim domain; that stretch reads DAIIVVEGRS…EVEDLEKDEV (87 aa). Residues glutamate 180, aspartate 222, and aspartate 224 each contribute to the Mg(2+) site. The interval 277–314 is disordered; sequence HNILSESDSKNSHKKHNGKHNNKHSNNKHQQHETKVKE. Basic residues predominate over residues 288–305; it reads SHKKHNGKHNNKHSNNKH.

The protein belongs to the archaeal DnaG primase family. In terms of assembly, forms a ternary complex with MCM helicase and DNA. Component of the archaeal exosome complex. The cofactor is Mg(2+).

The enzyme catalyses ssDNA + n NTP = ssDNA/pppN(pN)n-1 hybrid + (n-1) diphosphate.. Functionally, RNA polymerase that catalyzes the synthesis of short RNA molecules used as primers for DNA polymerase during DNA replication. Also part of the exosome, which is a complex involved in RNA degradation. Acts as a poly(A)-binding protein that enhances the interaction between heteromeric, adenine-rich transcripts and the exosome. The protein is DNA primase DnaG of Methanobrevibacter smithii (strain ATCC 35061 / DSM 861 / OCM 144 / PS).